A 304-amino-acid polypeptide reads, in one-letter code: Porphobilinogen deaminase (304 aa).

Cys-240 carries the post-translational modification S-(dipyrrolylmethanemethyl)cysteine.

It belongs to the HMBS family. In terms of assembly, monomer. It depends on dipyrromethane as a cofactor.

The enzyme catalyses 4 porphobilinogen + H2O = hydroxymethylbilane + 4 NH4(+). The protein operates within porphyrin-containing compound metabolism; protoporphyrin-IX biosynthesis; coproporphyrinogen-III from 5-aminolevulinate: step 2/4. In terms of biological role, tetrapolymerization of the monopyrrole PBG into the hydroxymethylbilane pre-uroporphyrinogen in several discrete steps. The polypeptide is Porphobilinogen deaminase (Xanthomonas campestris pv. campestris (strain ATCC 33913 / DSM 3586 / NCPPB 528 / LMG 568 / P 25)).